Consider the following 249-residue polypeptide: NAD(P)H-quinone oxidoreductase subunit K 2 (249 aa).

[4Fe-4S] cluster-binding residues include Cys54, Cys55, Cys119, and Cys150.

Belongs to the complex I 20 kDa subunit family. In terms of assembly, NDH-1 can be composed of about 15 different subunits; different subcomplexes with different compositions have been identified which probably have different functions. Requires [4Fe-4S] cluster as cofactor.

The protein localises to the cell inner membrane. The enzyme catalyses a plastoquinone + NADH + (n+1) H(+)(in) = a plastoquinol + NAD(+) + n H(+)(out). It catalyses the reaction a plastoquinone + NADPH + (n+1) H(+)(in) = a plastoquinol + NADP(+) + n H(+)(out). NDH-1 shuttles electrons from an unknown electron donor, via FMN and iron-sulfur (Fe-S) centers, to quinones in the respiratory and/or the photosynthetic chain. The immediate electron acceptor for the enzyme in this species is believed to be plastoquinone. Couples the redox reaction to proton translocation, and thus conserves the redox energy in a proton gradient. Cyanobacterial NDH-1 also plays a role in inorganic carbon-concentration. In Gloeobacter violaceus (strain ATCC 29082 / PCC 7421), this protein is NAD(P)H-quinone oxidoreductase subunit K 2.